The chain runs to 366 residues: Rab9 effector protein with kelch motifs (366 aa).

Kelch repeat units lie at residues 49 to 95, 100 to 146, 151 to 200, 204 to 253, 254 to 303, and 343 to 366; these read KILI…FISA, NIWV…TSSA, KLYV…VLTA, KLFV…AWKS, YIYI…LLPW, and LCFIFGGMDTDGELHSDCCVTILQ.

Its function is as follows. Rab9 effector required for endosome to trans-Golgi network (TGN) transport. In Xenopus laevis (African clawed frog), this protein is Rab9 effector protein with kelch motifs (rabepk).